The primary structure comprises 265 residues: Probable cell division protein kinase ECU08_0230 (265 aa).

A Protein kinase domain is found at 4–263 (YILGALIGSG…IMEILENEYG (260 aa)). ATP contacts are provided by residues 10–18 (IGSGTYGEV) and K33. Residue D121 is the Proton acceptor of the active site.

Belongs to the protein kinase superfamily. CMGC Ser/Thr protein kinase family. CDC2/CDKX subfamily.

The protein localises to the nucleus. It catalyses the reaction L-seryl-[protein] + ATP = O-phospho-L-seryl-[protein] + ADP + H(+). The catalysed reaction is L-threonyl-[protein] + ATP = O-phospho-L-threonyl-[protein] + ADP + H(+). May play a role in the control of the eukaryotic cell cycle. The polypeptide is Probable cell division protein kinase ECU08_0230 (Encephalitozoon cuniculi (strain GB-M1) (Microsporidian parasite)).